Here is a 299-residue protein sequence, read N- to C-terminus: Dihydroorotate dehydrogenase B (NAD(+)), catalytic subunit (299 aa).

FMN is bound by residues S21 and 44–45 (KS). Substrate contacts are provided by residues K44, 68-72 (NAVGL), and N125. Residue N125 coordinates FMN. C128 (nucleophile) is an active-site residue. K163 contributes to the FMN binding site. Position 189–190 (189–190 (NT)) interacts with substrate. FMN is bound by residues G214, 240–241 (GG), and 262–263 (GS).

The protein belongs to the dihydroorotate dehydrogenase family. Type 1 subfamily. Heterotetramer of 2 PyrK and 2 PyrD type B subunits. Requires FMN as cofactor.

It localises to the cytoplasm. The catalysed reaction is (S)-dihydroorotate + NAD(+) = orotate + NADH + H(+). Its pathway is pyrimidine metabolism; UMP biosynthesis via de novo pathway; orotate from (S)-dihydroorotate (NAD(+) route): step 1/1. Catalyzes the conversion of dihydroorotate to orotate with NAD(+) as electron acceptor. The polypeptide is Dihydroorotate dehydrogenase B (NAD(+)), catalytic subunit (pyrD) (Archaeoglobus fulgidus (strain ATCC 49558 / DSM 4304 / JCM 9628 / NBRC 100126 / VC-16)).